We begin with the raw amino-acid sequence, 468 residues long: Glucose transport protein (468 aa).

Over 1–17 (MNPSSSPSQSTANVKFV) the chain is Cytoplasmic. A helical transmembrane segment spans residues 18–38 (LLISGVAALGGFLFGFDTAVI). Residues 39–58 (NGAVAALQKHFQTDSLLTGL) are Extracellular-facing. The helical transmembrane segment at 59–78 (SVSLALLGSALGAFGAGPIA) threads the bilayer. At 79-84 (DRHGRI) the chain is on the cytoplasmic side. A helical membrane pass occupies residues 85–105 (KTMILAAVLFTLSSIGSGLPF). Topologically, residues 106–114 (TIWDFIFWR) are extracellular. A helical transmembrane segment spans residues 115-135 (VLGGIGVGAASVIAPAYIAEV). Topologically, residues 136–149 (SPAHLRGRLGSLQQ) are cytoplasmic. The helical transmembrane segment at 150 to 170 (LAIVSGIFIALLSNWFIALMA) threads the bilayer. Residues 171–186 (GGSAQNPWLFGAAAWR) lie on the Extracellular side of the membrane. A helical transmembrane segment spans residues 187-207 (WMFWTELIPALLYGVCAFLIP). Over 208 to 265 (ESPRYLVAQGQGEKAAAILWKVEGGDVPSRIEEIQATVSLDHKPRFSDLLSRRGGLLP) the chain is Cytoplasmic. Residues 266 to 286 (IVWIGMGLSALQQFVGINVIF) traverse the membrane as a helical segment. The Extracellular segment spans residues 287–307 (YYSSVLWRSVGFTEEKSLLIT). Residues 308-328 (VITGFINILTTLVAIAFVDKF) traverse the membrane as a helical segment. Topologically, residues 329–331 (GRK) are cytoplasmic. Residues 332-352 (PLLLMGSIGMTITLGILSVVF) traverse the membrane as a helical segment. The Extracellular segment spans residues 353–366 (GGATVVNGQPTLTG). A helical transmembrane segment spans residues 367–387 (AAGIIALVTANLYVFSFGFSW). The Cytoplasmic segment spans residues 388 to 412 (GPIVWVLLGEMFNNKIRAAALSVAA). The chain crosses the membrane as a helical span at residues 413–433 (GVQWIANFIISTTFPPLLDTV). At 434–436 (GLG) the chain is on the extracellular side. The helical transmembrane segment at 437–457 (PAYGLYATSAAISIFFIWFFV) threads the bilayer. Topologically, residues 458-468 (KETKGKTLEQM) are cytoplasmic.

Belongs to the major facilitator superfamily. Sugar transporter (TC 2.A.1.1) family.

The protein localises to the cell membrane. This is Glucose transport protein (gtr) from Synechocystis sp. (strain ATCC 27184 / PCC 6803 / Kazusa).